The sequence spans 291 residues: Dihydroorotate dehydrogenase A (fumarate) (291 aa).

FMN is bound by residues serine 18 and 42–43; that span reads KS. Residues lysine 42, 66–70, and asparagine 126 contribute to the substrate site; that span reads NAVGL. FMN is bound at residue asparagine 126. Cysteine 129 serves as the catalytic Nucleophile. Residues lysine 164 and isoleucine 190 each contribute to the FMN site. Residue 191 to 192 participates in substrate binding; the sequence is NT. Residues glycine 216, 242-243, and 264-265 contribute to the FMN site; these read GG and GS.

The protein belongs to the dihydroorotate dehydrogenase family. Type 1 subfamily. In terms of assembly, homodimer. The cofactor is FMN.

The protein localises to the cytoplasm. The catalysed reaction is (S)-dihydroorotate + fumarate = orotate + succinate. It participates in pyrimidine metabolism; UMP biosynthesis via de novo pathway. Functionally, catalyzes the conversion of dihydroorotate to orotate with fumarate as the electron acceptor. This chain is Dihydroorotate dehydrogenase A (fumarate) (pyrD), found in Lacticaseibacillus paracasei (strain ATCC 334 / BCRC 17002 / CCUG 31169 / CIP 107868 / KCTC 3260 / NRRL B-441) (Lactobacillus paracasei).